The following is a 910-amino-acid chain: Epithelial discoidin domain-containing receptor 1 (910 aa).

The first 19 residues, 1-19, serve as a signal peptide directing secretion; it reads MGTGTLSSLLLLLLLVTIG. Residues 22 to 414 lie on the Extracellular side of the membrane; it reads DMKGHFDPAK…VAKAEGSPTA (393 aa). Residues 32–186 form the F5/8 type C domain; it reads CRYALGMQDR…VCLRVELYGC (155 aa). Intrachain disulfides connect cysteine 32-cysteine 186 and cysteine 75-cysteine 178. Residues 193 to 368 form a DS-like domain region; sequence LSYTAPVGQT…LFSEISFISD (176 aa). Positions 212, 231, 234, 236, 254, and 256 each coordinate Ca(2+). Asparagine 212 carries N-linked (GlcNAc...) asparagine glycosylation. N-linked (GlcNAc...) asparagine glycosylation occurs at asparagine 261. A disulfide bridge links cysteine 304 with cysteine 349. Serine 361 and glutamate 362 together coordinate Ca(2+). Asparagine 371 and asparagine 391 each carry an N-linked (GlcNAc...) asparagine glycan. A helical membrane pass occupies residues 415–435; it reads ILIGCLVAIILLLLLIIALML. The Cytoplasmic portion of the chain corresponds to 436–910; sequence WRLHWRRLLS…FLADDALNTV (475 aa). The disordered stretch occupies residues 467-494; it reads ILINNRPGPREPPPYQEPRPRGTPTHSA. The short motif at 478-481 is the PPxY motif element; sequence PPPY. 3 positions are modified to phosphotyrosine; by autocatalysis: tyrosine 481, tyrosine 510, and tyrosine 517. Residues 607-902 enclose the Protein kinase domain; that stretch reads LRFKEKLGEG…PPFSQLHRFL (296 aa). ATP is bound by residues 613–621 and lysine 652; that span reads LGEGQFGEV. Tyrosine 737 bears the Phosphotyrosine; by autocatalysis mark. Residue aspartate 763 is the Proton acceptor of the active site. A phosphotyrosine; by autocatalysis mark is found at tyrosine 789, tyrosine 793, and tyrosine 794.

Belongs to the protein kinase superfamily. Tyr protein kinase family. Insulin receptor subfamily. Homodimer. Interacts (via PPxY motif) with WWC1 (via WW domains) in a collagen-regulated manner. Forms a tripartite complex with WWC1 and PRKCZ, but predominantly in the absence of collagen. Interacts (tyrosine phosphorylated) with SHC1. Interacts with SRC. Interacts with MYH9. Interacts with CDH1. Interacts with PTPN11. Interacts with NCK2. In terms of processing, autophosphorylated in response to fibrillar collagen binding. Various embryonic and adult tissues; also proliferative zones of the developing brain; hippocampal neurons.

It localises to the cell membrane. It catalyses the reaction L-tyrosyl-[protein] + ATP = O-phospho-L-tyrosyl-[protein] + ADP + H(+). Its function is as follows. Tyrosine kinase that functions as a cell surface receptor for fibrillar collagen and regulates cell attachment to the extracellular matrix, remodeling of the extracellular matrix, cell migration, differentiation, survival and cell proliferation. Collagen binding triggers a signaling pathway that involves SRC and leads to the activation of MAP kinases. Regulates remodeling of the extracellular matrix by up-regulation of the matrix metalloproteinases MMP2, MMP7 and MMP9, and thereby facilitates cell migration and wound healing. Promotes smooth muscle cell migration, and thereby contributes to arterial wound healing. Also plays a role in tumor cell invasion. Phosphorylates PTPN11. Required for normal blastocyst implantation during pregnancy, for normal mammary gland differentiation and normal lactation. Required for normal ear morphology and normal hearing. This is Epithelial discoidin domain-containing receptor 1 (Ddr1) from Rattus norvegicus (Rat).